Here is a 197-residue protein sequence, read N- to C-terminus: Dephospho-CoA kinase (197 aa).

The region spanning 5–197 (RLGLTGSIGM…IAHIRETADA (193 aa)) is the DPCK domain. 13–18 (GMGKST) serves as a coordination point for ATP.

Belongs to the CoaE family.

It is found in the cytoplasm. The catalysed reaction is 3'-dephospho-CoA + ATP = ADP + CoA + H(+). The protein operates within cofactor biosynthesis; coenzyme A biosynthesis; CoA from (R)-pantothenate: step 5/5. Its function is as follows. Catalyzes the phosphorylation of the 3'-hydroxyl group of dephosphocoenzyme A to form coenzyme A. The polypeptide is Dephospho-CoA kinase (Cereibacter sphaeroides (strain ATCC 17023 / DSM 158 / JCM 6121 / CCUG 31486 / LMG 2827 / NBRC 12203 / NCIMB 8253 / ATH 2.4.1.) (Rhodobacter sphaeroides)).